Here is a 346-residue protein sequence, read N- to C-terminus: MAPGSVTSDISPSSTSTAGSSRSPESEKPGPSHGGVPPGGPSHSSLPVGRRHPPVLRMVLEALQAGEQRRGTSVAAIKLYILHKYPTVDVLRFKYLLKQALATGMRRGLLARPLNSKARGATGSFKLVPKHKKKIQPRKMAPATAPRRAGEAKGKGPKKPSEAKEDPPNVGKVKKAAKRPAKVQKPPPKPGAATEKARKQGGAAKDTRAQSGEARKVPPKPDKAMRAPSSAGGLSRKAKAKGSRSSQGDAEAYRKTKAESKSSKPTASKVKNGAASPTKKKVVAKAKAPKAGQGPNTKAAAPAKGSGSKVVPAHLSRKTEAPKGPRKAGLPIKASSSKVSSQRAEA.

Low complexity-rich tracts occupy residues 1 to 23 (MAPG…SSRS) and 38 to 48 (PGGPSHSSLPV). 2 disordered regions span residues 1-50 (MAPG…PVGR) and 121-346 (ATGS…RAEA). An H15 domain is found at 51 to 129 (RHPPVLRMVL…GATGSFKLVP (79 aa)). Residues 128 to 137 (VPKHKKKIQP) are compositionally biased toward basic residues. Over residues 148–167 (RAGEAKGKGPKKPSEAKEDP) the composition is skewed to basic and acidic residues. Residues 164–179 (KEDPPNVGKVKKAAKR) carry the Nuclear localization signal motif. Over residues 172 to 182 (KVKKAAKRPAK) the composition is skewed to basic residues. Basic and acidic residues-rich tracts occupy residues 205-225 (KDTR…DKAM) and 251-262 (EAYRKTKAESKS). Basic residues predominate over residues 278 to 288 (TKKKVVAKAKA). Residues 298 to 309 (KAAAPAKGSGSK) are compositionally biased toward low complexity. Polar residues predominate over residues 334–346 (ASSSKVSSQRAEA).

Belongs to the histone H1/H5 family. As to expression, oocyte-specific.

Its subcellular location is the cytoplasm. It localises to the nucleus. The protein resides in the chromosome. Functionally, may play a key role in the control of gene expression during oogenesis and early embryogenesis, presumably through the perturbation of chromatin structure. Essential for meiotic maturation of germinal vesicle-stage oocytes. The somatic type linker histone H1c is rapidly replaced by H1oo in a donor nucleus transplanted into an oocyte. The greater mobility of H1oo as compared to H1c may contribute to this rapid replacement and increased instability of the embryonic chromatin structure. The rapid replacement of H1c with H1oo may play an important role in nuclear remodeling. This chain is Histone H1.8, found in Homo sapiens (Human).